The primary structure comprises 198 residues: MNLIPTVIEQTNRGERAYDIYSRLLKDRIIMLGSAIDDNVANSIVSQLLFLEAEDPEKDISIYINSPGGSITAGMAIYDTMQFIKPKVSTICIGMAASMGAFLLAAGEKGKRYALPNSEVMIHQPLGGAQGQATEIEIAAKRILSLRDKLNQVLAERTGQPIEVIERDTDRDNFKTAEEALQYGLIDKVLTRNTEEQK.

Ser98 functions as the Nucleophile in the catalytic mechanism. Residue His123 is part of the active site.

It belongs to the peptidase S14 family. Fourteen ClpP subunits assemble into 2 heptameric rings which stack back to back to give a disk-like structure with a central cavity, resembling the structure of eukaryotic proteasomes.

It is found in the cytoplasm. It catalyses the reaction Hydrolysis of proteins to small peptides in the presence of ATP and magnesium. alpha-casein is the usual test substrate. In the absence of ATP, only oligopeptides shorter than five residues are hydrolyzed (such as succinyl-Leu-Tyr-|-NHMec, and Leu-Tyr-Leu-|-Tyr-Trp, in which cleavage of the -Tyr-|-Leu- and -Tyr-|-Trp bonds also occurs).. In terms of biological role, cleaves peptides in various proteins in a process that requires ATP hydrolysis. Has a chymotrypsin-like activity. Plays a major role in the degradation of misfolded proteins. In Bacillus pumilus (strain SAFR-032), this protein is ATP-dependent Clp protease proteolytic subunit.